The following is a 166-amino-acid chain: Small ribosomal subunit protein bS6 (166 aa).

Basic and acidic residues-rich tracts occupy residues 96–142 and 149–166; these read HEEG…DRPP and GGDRGPRRPREGFEGGAE. The tract at residues 96–166 is disordered; sequence HEEGPSAMMQ…PREGFEGGAE (71 aa).

This sequence belongs to the bacterial ribosomal protein bS6 family.

Binds together with bS18 to 16S ribosomal RNA. The polypeptide is Small ribosomal subunit protein bS6 (Mesorhizobium japonicum (strain LMG 29417 / CECT 9101 / MAFF 303099) (Mesorhizobium loti (strain MAFF 303099))).